The sequence spans 294 residues: Early 4 ORF6 protein (294 aa).

The Nuclear localization signal motif lies at 239–255 (ARRTRRLMLRAVRIIAE).

The protein belongs to the adenoviridae E4 30 to 34 kDa protein family. As to quaternary structure, interacts with E1B-55k.

The protein resides in the host nucleus. Its subcellular location is the host cytoplasm. In terms of biological role, plays a major role to prevent cellular inhibition of viral genome replication by nuclear bodies. Assembles an SCF-like E3 ubiquitin ligase complex based on the cellular proteins ELOB, ELOC, CUL5 and RBX1, in cooperation with viral E1B-55K. This viral RING-type ligase ubiquitinates cellular substrates prior to proteasomal degradation: p53/TP53, LIG4, MRE11-RAD50-NBS1 (MRN) complex, ITGA3, DAXX and BLM. This Homo sapiens (Human) protein is Early 4 ORF6 protein.